The sequence spans 242 residues: DNA repair protein RecO (242 aa).

It belongs to the RecO family. Monomer.

In terms of biological role, involved in DNA repair and RecF pathway recombination. The chain is DNA repair protein RecO from Shigella sonnei (strain Ss046).